The following is an 82-amino-acid chain: Small ribosomal subunit protein bS18 (82 aa).

It belongs to the bacterial ribosomal protein bS18 family. Part of the 30S ribosomal subunit. Forms a tight heterodimer with protein bS6.

Binds as a heterodimer with protein bS6 to the central domain of the 16S rRNA, where it helps stabilize the platform of the 30S subunit. The chain is Small ribosomal subunit protein bS18 from Sinorhizobium fredii (strain NBRC 101917 / NGR234).